Consider the following 377-residue polypeptide: MEVAMSKDLQQEANLAKKRYIDLCRQGRIFDARNRIIGGDTQAWDFQVRDQKIKEITDKARHEAFAAEMKHNDKVMCMAHDREQRHRKQLCRAINDFQQNFQKPETRREFDLSDPLALQKELPARISDNDMRNTISGMQKFMGEDLNFQERRRFQKEQSREWFLQQHGEREKARADHLLAEHLHTQTRLKFDETARELMKLEGSTRKEVCAAVKAFNKNQVVELTERKRQEKQQEQEDNMTEITNLLHGDLLSENPRPVASSFGSHRVVLDRWKGMNREQLEEIWFTQKRQIQEKLRLQEEERQHSMDWDLRRIRKAHASLLHERQQQRLLREQRRALDCSNLNLARQQYLQKKQMNTASSSQPTEDYFSQFNTRSR.

A coiled-coil region spans residues 217–246 (NKNQVVELTERKRQEKQQEQEDNMTEITNL). The interval 354-377 (KQMNTASSSQPTEDYFSQFNTRSR) is disordered.

Belongs to the RIB43A family. In terms of assembly, microtubule inner protein component of sperm flagellar doublet microtubules.

The protein localises to the cytoplasm. Its subcellular location is the cytoskeleton. It localises to the cilium axoneme. The protein resides in the flagellum axoneme. Microtubule inner protein (MIP) part of the dynein-decorated doublet microtubules (DMTs) in cilia axoneme, which is required for motile cilia beating. This Mus musculus (Mouse) protein is RIB43A-like with coiled-coils protein 2.